Reading from the N-terminus, the 160-residue chain is ATP synthase subunit b (160 aa).

The chain crosses the membrane as a helical span at residues 5-27; sequence IEQILTQIIAFLIMLGVLKKFVW.

The protein belongs to the ATPase B chain family. In terms of assembly, F-type ATPases have 2 components, F(1) - the catalytic core - and F(0) - the membrane proton channel. F(1) has five subunits: alpha(3), beta(3), gamma(1), delta(1), epsilon(1). F(0) has three main subunits: a(1), b(2) and c(10-14). The alpha and beta chains form an alternating ring which encloses part of the gamma chain. F(1) is attached to F(0) by a central stalk formed by the gamma and epsilon chains, while a peripheral stalk is formed by the delta and b chains.

The protein resides in the cell inner membrane. Functionally, f(1)F(0) ATP synthase produces ATP from ADP in the presence of a proton or sodium gradient. F-type ATPases consist of two structural domains, F(1) containing the extramembraneous catalytic core and F(0) containing the membrane proton channel, linked together by a central stalk and a peripheral stalk. During catalysis, ATP synthesis in the catalytic domain of F(1) is coupled via a rotary mechanism of the central stalk subunits to proton translocation. Component of the F(0) channel, it forms part of the peripheral stalk, linking F(1) to F(0). The protein is ATP synthase subunit b of Protochlamydia amoebophila (strain UWE25).